We begin with the raw amino-acid sequence, 551 residues long: ATP synthase subunit alpha (551 aa).

Residue 174 to 181 coordinates ATP; that stretch reads GDRQTGKT.

It belongs to the ATPase alpha/beta chains family. In terms of assembly, F-type ATPases have 2 components, CF(1) - the catalytic core - and CF(0) - the membrane proton channel. CF(1) has five subunits: alpha(3), beta(3), gamma(1), delta(1), epsilon(1). CF(0) has three main subunits: a(1), b(2) and c(9-12). The alpha and beta chains form an alternating ring which encloses part of the gamma chain. CF(1) is attached to CF(0) by a central stalk formed by the gamma and epsilon chains, while a peripheral stalk is formed by the delta and b chains.

Its subcellular location is the cell inner membrane. It catalyses the reaction ATP + H2O + 4 H(+)(in) = ADP + phosphate + 5 H(+)(out). Functionally, produces ATP from ADP in the presence of a proton gradient across the membrane. The alpha chain is a regulatory subunit. The chain is ATP synthase subunit alpha from Salinibacter ruber (strain DSM 13855 / M31).